The following is a 148-amino-acid chain: Small ribosomal subunit protein uS13 (148 aa).

It belongs to the universal ribosomal protein uS13 family. In terms of assembly, part of the 30S ribosomal subunit. Forms a loose heterodimer with protein S19. Forms two bridges to the 50S subunit in the 70S ribosome.

Its function is as follows. Located at the top of the head of the 30S subunit, it contacts several helices of the 16S rRNA. In the 70S ribosome it contacts the 23S rRNA (bridge B1a) and protein L5 of the 50S subunit (bridge B1b), connecting the 2 subunits; these bridges are implicated in subunit movement. This chain is Small ribosomal subunit protein uS13, found in Pyrococcus abyssi (strain GE5 / Orsay).